We begin with the raw amino-acid sequence, 425 residues long: Gamma-glutamyl phosphate reductase (425 aa).

This sequence belongs to the gamma-glutamyl phosphate reductase family.

It is found in the cytoplasm. The enzyme catalyses L-glutamate 5-semialdehyde + phosphate + NADP(+) = L-glutamyl 5-phosphate + NADPH + H(+). Its pathway is amino-acid biosynthesis; L-proline biosynthesis; L-glutamate 5-semialdehyde from L-glutamate: step 2/2. Functionally, catalyzes the NADPH-dependent reduction of L-glutamate 5-phosphate into L-glutamate 5-semialdehyde and phosphate. The product spontaneously undergoes cyclization to form 1-pyrroline-5-carboxylate. The sequence is that of Gamma-glutamyl phosphate reductase from Xylella fastidiosa (strain M23).